We begin with the raw amino-acid sequence, 295 residues long: Lipoyl synthase (295 aa).

[4Fe-4S] cluster-binding residues include Cys34, Cys39, Cys45, Cys60, Cys64, Cys67, and Ser273. The Radical SAM core domain occupies Trp46–Ser262.

Belongs to the radical SAM superfamily. Lipoyl synthase family. Requires [4Fe-4S] cluster as cofactor.

It localises to the cytoplasm. It catalyses the reaction [[Fe-S] cluster scaffold protein carrying a second [4Fe-4S](2+) cluster] + N(6)-octanoyl-L-lysyl-[protein] + 2 oxidized [2Fe-2S]-[ferredoxin] + 2 S-adenosyl-L-methionine + 4 H(+) = [[Fe-S] cluster scaffold protein] + N(6)-[(R)-dihydrolipoyl]-L-lysyl-[protein] + 4 Fe(3+) + 2 hydrogen sulfide + 2 5'-deoxyadenosine + 2 L-methionine + 2 reduced [2Fe-2S]-[ferredoxin]. The protein operates within protein modification; protein lipoylation via endogenous pathway; protein N(6)-(lipoyl)lysine from octanoyl-[acyl-carrier-protein]: step 2/2. Its function is as follows. Catalyzes the radical-mediated insertion of two sulfur atoms into the C-6 and C-8 positions of the octanoyl moiety bound to the lipoyl domains of lipoate-dependent enzymes, thereby converting the octanoylated domains into lipoylated derivatives. The chain is Lipoyl synthase from Anaplasma marginale (strain St. Maries).